We begin with the raw amino-acid sequence, 175 residues long: Large ribosomal subunit protein uL10 (175 aa).

The protein belongs to the universal ribosomal protein uL10 family. In terms of assembly, part of the ribosomal stalk of the 50S ribosomal subunit. The N-terminus interacts with L11 and the large rRNA to form the base of the stalk. The C-terminus forms an elongated spine to which L12 dimers bind in a sequential fashion forming a multimeric L10(L12)X complex.

Its function is as follows. Forms part of the ribosomal stalk, playing a central role in the interaction of the ribosome with GTP-bound translation factors. The polypeptide is Large ribosomal subunit protein uL10 (rplJ) (Xylella fastidiosa (strain 9a5c)).